Here is a 315-residue protein sequence, read N- to C-terminus: MLEIEKPIIECIEANEDGTYGKYVVEPLERGYGITLGNALRRILLSSLPGVATTSVKIDGVLHEFSTVQGVKEDVTELILNIKSLALRMNGEGPKVIYIDAKGPGEVTGADIKTDGDVEVVNKNLHIATLDNDGRLYMELTVNKGRGYVTQNKNKSDELPISAIAVDSIYTPVKRVNFTVDNTRVGQITDYDKLTLEIWTNGTIKIDEAISLSAKILIEHFKLFMSLTDNTNDVEIMIEKEDDKKEKVLEMTVEELDLSVRSYNCLKRAGINTVQELATKSMDDMMKVRNLGKKSLEEVERKLKELGLALKLTEE.

The alpha N-terminal domain (alpha-NTD) stretch occupies residues Met1 to Thr228. Residues Lys245–Glu315 are alpha C-terminal domain (alpha-CTD).

The protein belongs to the RNA polymerase alpha chain family. As to quaternary structure, homodimer. The RNAP catalytic core consists of 2 alpha, 1 beta, 1 beta' and 1 omega subunit. When a sigma factor is associated with the core the holoenzyme is formed, which can initiate transcription.

The enzyme catalyses RNA(n) + a ribonucleoside 5'-triphosphate = RNA(n+1) + diphosphate. In terms of biological role, DNA-dependent RNA polymerase catalyzes the transcription of DNA into RNA using the four ribonucleoside triphosphates as substrates. The protein is DNA-directed RNA polymerase subunit alpha of Clostridium beijerinckii (strain ATCC 51743 / NCIMB 8052) (Clostridium acetobutylicum).